The sequence spans 252 residues: UPF0246 protein LJ_0535 (252 aa).

The protein belongs to the UPF0246 family.

The protein is UPF0246 protein LJ_0535 of Lactobacillus johnsonii (strain CNCM I-12250 / La1 / NCC 533).